Reading from the N-terminus, the 169-residue chain is Peptide deformylase (169 aa).

Residues Cys-91 and His-133 each contribute to the Fe cation site. The active site involves Glu-134. His-137 contacts Fe cation.

This sequence belongs to the polypeptide deformylase family. Fe(2+) is required as a cofactor.

It carries out the reaction N-terminal N-formyl-L-methionyl-[peptide] + H2O = N-terminal L-methionyl-[peptide] + formate. Removes the formyl group from the N-terminal Met of newly synthesized proteins. Requires at least a dipeptide for an efficient rate of reaction. N-terminal L-methionine is a prerequisite for activity but the enzyme has broad specificity at other positions. This is Peptide deformylase from Klebsiella pneumoniae subsp. pneumoniae (strain ATCC 700721 / MGH 78578).